The chain runs to 1218 residues: NACHT, LRR and PYD domains-containing protein 1a allele 4 (1218 aa).

Over residues 1 to 29 (MGESQSKQESNTRVAQHGSQQDVDPTFQT) the composition is skewed to polar residues. Disordered regions lie at residues 1–44 (MGES…QVEQ) and 71–91 (EMDH…DRSE). The span at 77-87 (RRHSHQSKKKL) shows a compositional bias: basic residues. An NACHT domain is found at 175–484 (QLVIIEGAAG…EFFAAMSYIL (310 aa)). Position 181 to 188 (181 to 188 (GAAGIGKS)) interacts with ATP. LRR repeat units lie at residues 343–364 (KERN…LTLC), 673–693 (NLEE…RSLC), and 730–750 (RLAE…RQLC). Polar residues predominate over residues 799–815 (TMPTENTDGEESLTSSK). A disordered region spans residues 799-842 (TMPTENTDGEESLTSSKQQQQQSGDKHMEPLGTDDDFWGPSGPV). The segment at 835-968 (FWGPSGPVST…HFAVLENPSF (134 aa)) is ZU5. One can recognise an FIIND domain in the interval 835 to 1118 (FWGPSGPVST…LRPALPRMAS (284 aa)). A UPA region spans residues 969–1118 (SPMGVLLRMI…LRPALPRMAS (150 aa)). The CARD domain occupies 1122–1211 (DAPALLHFVD…HLIMDLLEKS (90 aa)).

Belongs to the NLRP family. As to quaternary structure, interacts (via LRR repeats) with BCL2 and BCL2L1 (via the loop between motifs BH4 and BH3). Interacts with NOD2; this interaction is enhanced in the presence of muramyl dipeptide (MDP) and increases IL1B release. Interacts with EIF2AK2/PKR; this interaction requires EIF2AK2 activity, is accompanied by EIF2AK2 autophosphorylation and promotes inflammasome assembly in response to danger-associated signals. Interacts with MEFV; this interaction targets Nlrp1a to degradation by autophagy, hence preventing excessive IL1B- and IL18-mediated inflammation. Interacts with DPP9; leading to inhibit activation of the inflammasome. DPP9 acts via formation of a ternary complex, composed of a DPP9 homodimer, one full-length NLRP1 protein, and one cleaved C-terminus of Nlrp1a (NACHT, LRR and PYD domains-containing protein 1a, C-terminus). Interacts with DPP8; leading to inhibit activation of the inflammasome, probably via formation of a ternary complex with DPP8. Interacts with the C-terminal part of Nlrp1a (NACHT, LRR and PYD domains-containing protein 1a, C-terminus) in absence of pathogens and other damage-associated signals. In terms of assembly, interacts with the N-terminal part of Nlrp1a (NACHT, LRR and PYD domains-containing protein 1a, N-terminus) in absence of pathogens and other damage-associated signals. Homomultimer; forms the Nlrp1a inflammasome polymeric complex, a filament composed of homopolymers of this form in response to pathogens and other damage-associated signals. The Nlrp1a inflammasome polymeric complex directly recruits pro-caspase-1 (proCASP1) independently of PYCARD/ASC. Interacts (via CARD domain) with CASP1 (via CARD domain); leading to CASP1 activation. Post-translationally, autocatalytically cleaved. Autocatalytic cleavage in FIIND region occurs constitutively, prior to activation signals, and is required for inflammasome activity (IL1B release), possibly by facilitating CASP1 binding. Both N- and C-terminal parts remain associated non-covalently. In terms of processing, ubiquitinated in response to pathogen-associated signals, leading to its degradation by the proteasome and subsequent release of the cleaved C-terminal part of the protein (NACHT, LRR and PYD domains-containing protein 1a, C-terminus), which polymerizes and forms the Nlrp1a inflammasome.

It localises to the cytoplasm. Its subcellular location is the cytosol. The protein resides in the nucleus. The protein localises to the inflammasome. Its activity is regulated as follows. Activated by pathogens and other damage-associated signals: activation promotes ubiquitination and degradation of the N-terminal part, releasing the cleaved C-terminal part of the protein (NACHT, LRR and PYD domains-containing protein 1a, C-terminus), which polymerizes and forms the Nlrp1a inflammasome. Nlrp1a inflammasome is inhibited by DPP8 and DPP9, which sequester the C-terminal fragment of Nlrp1a (NACHT, LRR and PYD domains-containing protein 1a, C-terminus) in a ternary complex, thereby preventing Nlrp1a oligomerization and activation. Nlrp1a inflammasome is strongly activated by Val-boroPro (Talabostat, PT-100), an inhibitor of dipeptidyl peptidases DPP8 and DPP9. Val-boroPro relieves inhibition of DPP8 and/or DPP9 by promoting disruption of the ternary complex, releasing its C-terminal part from autoinhibition. Not activated by cleavage by B.anthracis lethal toxin (LT) endopeptidase. Functionally, acts as the sensor component of the Nlrp1a inflammasome, which mediates inflammasome activation in response to various pathogen-associated signals, leading to subsequent pyroptosis. Inflammasomes are supramolecular complexes that assemble in the cytosol in response to pathogens and other damage-associated signals and play critical roles in innate immunity and inflammation. Acts as a recognition receptor (PRR): recognizes specific pathogens and other damage-associated signals, such as Val-boroPro inhibitor, and mediates the formation of the inflammasome polymeric complex. In response to pathogen-associated signals, the N-terminal part of Nlrp1a is degraded by the proteasome, releasing the cleaved C-terminal part of the protein (NACHT, LRR and PYD domains-containing protein 1a, C-terminus), which polymerizes to initiate the formation of the inflammasome complex: the inflammasome directly recruits pro-caspase-1 (proCASP1) independently of PYCARD/ASC and promotes caspase-1 (CASP1) activation, which subsequently cleaves and activates inflammatory cytokines IL1B and IL18 and gasdermin-D (GSDMD), leading to pyroptosis. In the absence of GSDMD expression, the Nlrp1a inflammasome is able to recruit and activate CASP8, leading to activation of gasdermin-E (GSDME). In terms of biological role, constitutes the precursor of the Nlrp1a inflammasome, which mediates autoproteolytic processing within the FIIND domain to generate the N-terminal and C-terminal parts, which are associated non-covalently in absence of pathogens and other damage-associated signals. Its function is as follows. Regulatory part that prevents formation of the Nlrp1a inflammasome: in absence of pathogens and other damage-associated signals, interacts with the C-terminal part of Nlrp1a (NACHT, LRR and PYD domains-containing protein 1a, C-terminus), preventing activation of the Nlrp1a inflammasome. In response to pathogen-associated signals, this part is ubiquitinated by the N-end rule pathway and degraded by the proteasome, releasing the cleaved C-terminal part of the protein, which polymerizes and forms the Nlrp1a inflammasome. Constitutes the active part of the Nlrp1a inflammasome. In absence of pathogens and other damage-associated signals, interacts with the N-terminal part of Nlrp1a (NACHT, LRR and PYD domains-containing protein 1a, N-terminus), preventing activation of the Nlrp1a inflammasome. In response to pathogen-associated signals, the N-terminal part of Nlrp1a is degraded by the proteasome, releasing this form, which polymerizes to form the Nlrp1a inflammasome complex: the Nlrp1a inflammasome complex then directly recruits pro-caspase-1 (proCASP1) and promotes caspase-1 (CASP1) activation, leading to gasdermin-D (GSDMD) cleavage and subsequent pyroptosis. The protein is NACHT, LRR and PYD domains-containing protein 1a allele 4 of Rattus norvegicus (Rat).